We begin with the raw amino-acid sequence, 43 residues long: Thymosin beta-b (43 aa).

2 stretches are compositionally biased toward basic and acidic residues: residues 1-25 (MADKPDISEVSQFDKTKLKKTETQE) and 33-43 (ETIEQEKQCEA). Residues 1-43 (MADKPDISEVSQFDKTKLKKTETQEKNTLPTKETIEQEKQCEA) are disordered.

This sequence belongs to the thymosin beta family.

It localises to the cytoplasm. Its subcellular location is the cytoskeleton. Its function is as follows. Plays an important role in the organization of the cytoskeleton. Binds to and sequesters actin monomers (G actin) and therefore inhibits actin polymerization. This Cyprinus carpio (Common carp) protein is Thymosin beta-b.